The sequence spans 400 residues: E3 ubiquitin-protein ligase RNF149 (400 aa).

Residues 1–32 (MAWRRREASVGARGVLALALLALALCVPGARG) form the signal peptide. 2 N-linked (GlcNAc...) asparagine glycosylation sites follow: asparagine 52 and asparagine 145. A PA domain is found at 67–175 (SSPKEGAHGL…PKGREILELV (109 aa)). Residues 201–221 (VVFVAIAFITMMIISLAWLIF) form a helical membrane-spanning segment. Residues 269–310 (CAVCIENFKVKDIIRILPCKHIFHRICIDPWLLDHRTCPMCK) form an RING-type; atypical zinc finger. The segment at 325–400 (DVQEMPAPES…SDSRHGGPIS (76 aa)) is disordered. A Phosphoserine modification is found at serine 345. Residues 356 to 368 (DSSPPSASPAESE) show a composition bias toward low complexity. Basic and acidic residues predominate over residues 389–400 (GRSDSRHGGPIS).

It localises to the membrane. It catalyses the reaction S-ubiquitinyl-[E2 ubiquitin-conjugating enzyme]-L-cysteine + [acceptor protein]-L-lysine = [E2 ubiquitin-conjugating enzyme]-L-cysteine + N(6)-ubiquitinyl-[acceptor protein]-L-lysine.. It participates in protein modification; protein ubiquitination. E3 ubiquitin-protein ligase. Ubiquitinates BRAF, inducing its proteasomal degradation. This chain is E3 ubiquitin-protein ligase RNF149 (RNF149), found in Homo sapiens (Human).